Consider the following 291-residue polypeptide: N-acetylmannosamine kinase (291 aa).

ATP-binding positions include 5-12 (AIDIGGTK) and 132-139 (GVGGGVVS). Zn(2+) is bound by residues histidine 156, cysteine 166, cysteine 168, and cysteine 173.

It belongs to the ROK (NagC/XylR) family. NanK subfamily. As to quaternary structure, homodimer.

It carries out the reaction an N-acyl-D-mannosamine + ATP = an N-acyl-D-mannosamine 6-phosphate + ADP + H(+). It functions in the pathway amino-sugar metabolism; N-acetylneuraminate degradation; D-fructose 6-phosphate from N-acetylneuraminate: step 2/5. In terms of biological role, catalyzes the phosphorylation of N-acetylmannosamine (ManNAc) to ManNAc-6-P. The sequence is that of N-acetylmannosamine kinase from Escherichia coli O9:H4 (strain HS).